The following is a 415-amino-acid chain: Diaminopimelate decarboxylase (415 aa).

Lysine 54 is subject to N6-(pyridoxal phosphate)lysine. Pyridoxal 5'-phosphate-binding positions include glycine 223 and 264–267 (EPGR). 3 residues coordinate substrate: arginine 267, arginine 303, and tyrosine 307. Cysteine 338 acts as the Proton donor in catalysis. Substrate is bound by residues glutamate 339 and tyrosine 374. Residue tyrosine 374 coordinates pyridoxal 5'-phosphate.

This sequence belongs to the Orn/Lys/Arg decarboxylase class-II family. LysA subfamily. In terms of assembly, homodimer. Pyridoxal 5'-phosphate serves as cofactor.

It catalyses the reaction meso-2,6-diaminopimelate + H(+) = L-lysine + CO2. It functions in the pathway amino-acid biosynthesis; L-lysine biosynthesis via DAP pathway; L-lysine from DL-2,6-diaminopimelate: step 1/1. In terms of biological role, specifically catalyzes the decarboxylation of meso-diaminopimelate (meso-DAP) to L-lysine. The sequence is that of Diaminopimelate decarboxylase from Buchnera aphidicola subsp. Schizaphis graminum (strain Sg).